We begin with the raw amino-acid sequence, 434 residues long: Transcription elongation factor B polypeptide 3 (434 aa).

Residues 142–161 are disordered; that stretch reads KPEPVDVHEQQASSSSMSYQ. The segment covering 151 to 160 has biased composition (polar residues); that stretch reads QQASSSSMSY. The BC box stretch occupies residues 221–230; that stretch reads TLVSLCQTVL. The F-box domain maps to 237-281; that stretch reads IDHVGIVPFDLLKPVLDHASTDQLRHILDVNPMLVEDADEMFHEM. Residues 391–415 form a disordered region; the sequence is ITPRGGGVPSTSRSRSNNNNNMNNG.

Heterotrimer of an A, B and C subunit.

The protein localises to the nucleus. Functionally, SIII, also known as elongin, is a general transcription elongation factor that increases the RNA polymerase II transcription elongation past template-encoded arresting sites. Subunit A is transcriptionally active and its transcription activity is strongly enhanced by binding to the dimeric complex of the SIII regulatory subunits B and C (elongin BC complex). In Caenorhabditis elegans, this protein is Transcription elongation factor B polypeptide 3.